Here is a 396-residue protein sequence, read N- to C-terminus: Elongation factor Tu 2 (396 aa).

The 197-residue stretch at 10–206 folds into the tr-type G domain; the sequence is KPHCNIGTIG…AVDAYIPQPE (197 aa). The tract at residues 19–26 is G1; it reads GHVDHGKT. 19-26 serves as a coordination point for GTP; that stretch reads GHVDHGKT. Residue threonine 26 coordinates Mg(2+). Residues 60–64 form a G2 region; it reads GITIS. The segment at 81–84 is G3; that stretch reads DCPG. GTP-binding positions include 81–85 and 136–139; these read DCPGH and NKCD. Residues 136 to 139 form a G4 region; the sequence is NKCD. The tract at residues 174–176 is G5; that stretch reads SAL.

Belongs to the TRAFAC class translation factor GTPase superfamily. Classic translation factor GTPase family. EF-Tu/EF-1A subfamily. As to quaternary structure, monomer.

Its subcellular location is the cytoplasm. The catalysed reaction is GTP + H2O = GDP + phosphate + H(+). In terms of biological role, GTP hydrolase that promotes the GTP-dependent binding of aminoacyl-tRNA to the A-site of ribosomes during protein biosynthesis. The protein is Elongation factor Tu 2 of Rhodopseudomonas palustris (strain BisB5).